The chain runs to 80 residues: Defensin-like protein 16 (80 aa).

The N-terminal stretch at M1–A29 is a signal peptide. Q30 is modified (pyrrolidone carboxylic acid). 4 cysteine pairs are disulfide-bonded: C33–C80, C44–C65, C50–C74, and C54–C76.

It belongs to the DEFL family. In terms of tissue distribution, predominantly expressed in leaves.

The protein localises to the secreted. In terms of biological role, confers broad-spectrum resistance to pathogens. Has antifungal activity in vitro. The protein is Defensin-like protein 16 (PDF1.2A) of Arabidopsis thaliana (Mouse-ear cress).